The primary structure comprises 134 residues: Profilin-2 (134 aa).

A disulfide bridge connects residues Cys-13 and Cys-118. The Involved in PIP2 interaction signature appears at 84–100 (AVIRGKKGSGGITIKKT). Phosphothreonine is present on Thr-114.

The protein belongs to the profilin family. As to quaternary structure, occurs in many kinds of cells as a complex with monomeric actin in a 1:1 ratio. Phosphorylated by MAP kinases.

Its subcellular location is the cytoplasm. The protein localises to the cytoskeleton. Functionally, binds to actin and affects the structure of the cytoskeleton. At high concentrations, profilin prevents the polymerization of actin, whereas it enhances it at low concentrations. In Olea europaea (Common olive), this protein is Profilin-2.